A 362-amino-acid chain; its full sequence is MERIVVTLGERSYPITIASGLFNEPASFLPLKSGEQVMLVTNETLAPLYLDKVRGVLEQAGVNVDSVILPDGEQYKSLAVLDTVFTALLQKPHGRDTTLVALGGGVVGDLTGFAAASYQRGVRFIQVPTTLLSQVDSSVGGKTAVNHPLGKNMIGAFYQPASVVVDLDCLKTLPPRELASGLAEVIKYGIILDGAFFNWLEENLDALLRLDGPAMAYCIRRCCELKAEVVAADERETGLRALLNLGHTFGHAIEAEMGYGNWLHGEAVAAGMVMAARTSERLGQFSSAETQRIITLLTRAGLPVNGPREMSAQAYLPHMLRDKKVLAGEMRLILPLAIGKSEVRSGVSHELVLNAIADCQSA.

NAD(+)-binding positions include 71–76 (DGEQYK), 105–109 (GVVGD), 129–130 (TT), lysine 142, lysine 151, and 169–172 (CLKT). The Zn(2+) site is built by glutamate 184, histidine 247, and histidine 264.

The protein belongs to the sugar phosphate cyclases superfamily. Dehydroquinate synthase family. The cofactor is Co(2+). It depends on Zn(2+) as a cofactor. NAD(+) is required as a cofactor.

It localises to the cytoplasm. It catalyses the reaction 7-phospho-2-dehydro-3-deoxy-D-arabino-heptonate = 3-dehydroquinate + phosphate. The protein operates within metabolic intermediate biosynthesis; chorismate biosynthesis; chorismate from D-erythrose 4-phosphate and phosphoenolpyruvate: step 2/7. Its function is as follows. Catalyzes the conversion of 3-deoxy-D-arabino-heptulosonate 7-phosphate (DAHP) to dehydroquinate (DHQ). The polypeptide is 3-dehydroquinate synthase (Escherichia coli O127:H6 (strain E2348/69 / EPEC)).